Here is a 180-residue protein sequence, read N- to C-terminus: MPSSVPKTSIESLGSPSSLSSSQASEPLCPLKHPSHRPPASTLSPNLTSSTESLGYLSSLSSSQPPEPLRPLECPSHKPCGRSLPRRRNPGWVSWSDSMQADSETDAIICPMCKAPERSCPHTWWVPSSPRVIRGVGRCSDPNLGLSWRQEAARAWCHCTSSQYPFKHPNLPTHLPKASF.

A disordered region spans residues 1–93 (MPSSVPKTSI…LPRRRNPGWV (93 aa)). 2 stretches are compositionally biased toward low complexity: residues 9–25 (SIES…SQAS) and 47–64 (LTSS…SSSQ).

This is an uncharacterized protein from Homo sapiens (Human).